The chain runs to 203 residues: GTP cyclohydrolase-2 (203 aa).

49-53 (RIHSE) lines the GTP pocket. Cysteine 54, cysteine 65, and cysteine 67 together coordinate Zn(2+). Residues glutamine 70, 92 to 94 (EGR), and threonine 114 each bind GTP. Catalysis depends on aspartate 126, which acts as the Proton acceptor. Arginine 128 functions as the Nucleophile in the catalytic mechanism. Residues threonine 149 and lysine 154 each coordinate GTP.

It belongs to the GTP cyclohydrolase II family. The cofactor is Zn(2+).

The catalysed reaction is GTP + 4 H2O = 2,5-diamino-6-hydroxy-4-(5-phosphoribosylamino)-pyrimidine + formate + 2 phosphate + 3 H(+). It functions in the pathway cofactor biosynthesis; riboflavin biosynthesis; 5-amino-6-(D-ribitylamino)uracil from GTP: step 1/4. Catalyzes the conversion of GTP to 2,5-diamino-6-ribosylamino-4(3H)-pyrimidinone 5'-phosphate (DARP), formate and pyrophosphate. The chain is GTP cyclohydrolase-2 from Shewanella sp. (strain MR-4).